The chain runs to 203 residues: Peroxiredoxin (203 aa).

The 154-residue stretch at 3-156 folds into the Thioredoxin domain; that stretch reads VVLGQKAPDF…IIRVIKALQF (154 aa). Catalysis depends on cysteine 44, which acts as the Cysteine sulfenic acid (-SOH) intermediate. Arginine 119 contacts substrate.

It belongs to the peroxiredoxin family. Prx6 subfamily. Homodecamer. Pentamer of dimers that assemble into a ring structure.

It localises to the cytoplasm. It carries out the reaction a hydroperoxide + [thioredoxin]-dithiol = an alcohol + [thioredoxin]-disulfide + H2O. Functionally, thiol-specific peroxidase that catalyzes the reduction of hydrogen peroxide and organic hydroperoxides to water and alcohols, respectively. Plays a role in cell protection against oxidative stress by detoxifying peroxides. This Thermoplasma volcanium (strain ATCC 51530 / DSM 4299 / JCM 9571 / NBRC 15438 / GSS1) protein is Peroxiredoxin.